A 391-amino-acid chain; its full sequence is Phosphoglycerate kinase (391 aa).

Residues 21-23, Arg-36, 59-62, Arg-113, and Arg-146 contribute to the substrate site; these read DLN and HLGR. ATP-binding positions include Lys-197, Glu-319, and 345 to 348; that span reads GGDT.

This sequence belongs to the phosphoglycerate kinase family. In terms of assembly, monomer.

The protein resides in the cytoplasm. The catalysed reaction is (2R)-3-phosphoglycerate + ATP = (2R)-3-phospho-glyceroyl phosphate + ADP. It participates in carbohydrate degradation; glycolysis; pyruvate from D-glyceraldehyde 3-phosphate: step 2/5. This is Phosphoglycerate kinase from Shewanella baltica (strain OS223).